The following is a 563-amino-acid chain: Proline--tRNA ligase (563 aa).

It belongs to the class-II aminoacyl-tRNA synthetase family. ProS type 1 subfamily. Homodimer.

It is found in the cytoplasm. It catalyses the reaction tRNA(Pro) + L-proline + ATP = L-prolyl-tRNA(Pro) + AMP + diphosphate. Functionally, catalyzes the attachment of proline to tRNA(Pro) in a two-step reaction: proline is first activated by ATP to form Pro-AMP and then transferred to the acceptor end of tRNA(Pro). As ProRS can inadvertently accommodate and process non-cognate amino acids such as alanine and cysteine, to avoid such errors it has two additional distinct editing activities against alanine. One activity is designated as 'pretransfer' editing and involves the tRNA(Pro)-independent hydrolysis of activated Ala-AMP. The other activity is designated 'posttransfer' editing and involves deacylation of mischarged Ala-tRNA(Pro). The misacylated Cys-tRNA(Pro) is not edited by ProRS. This is Proline--tRNA ligase from Persephonella marina (strain DSM 14350 / EX-H1).